A 142-amino-acid chain; its full sequence is Large ribosomal subunit protein uL13 (142 aa).

This sequence belongs to the universal ribosomal protein uL13 family. Part of the 50S ribosomal subunit.

Its function is as follows. This protein is one of the early assembly proteins of the 50S ribosomal subunit, although it is not seen to bind rRNA by itself. It is important during the early stages of 50S assembly. This is Large ribosomal subunit protein uL13 from Shewanella frigidimarina (strain NCIMB 400).